The sequence spans 332 residues: MKFQSTLLLAAAAGSALAVPHGPGHKKRASVFEWFGSNESGAEFGTNIPGVWGTDYIFPDPSAISTLIDKGMNFFRVQFMMERLLPDSMTGSYDEEYLANLTTVIKAVTDGGAHALVDPHNYGRYNGEIISSTSDFQTFWENLAGQYKDNDLVMFDTNNEYHDMDQDLVLNLNQAAINGIRAAGATSQYIFVEGNSWTGAWTWVDVNDNMKNLTDPEDKIVYEMHQYLDSDGSGTSETCVSETIGKERVTEATQWLKDNKKVGFIGEYAGGSNDVCRSAVSGMLEYMANNTDVWKGASWWAAGPWWGDYIFSMEPPDGTAYTGMLDILEAYL.

An N-terminal signal peptide occupies residues 1–18; it reads MKFQSTLLLAAAAGSALA. Asn38 and Asn100 each carry an N-linked (GlcNAc...) asparagine glycan. The active-site Proton donor is the Glu160. Asn212 is a glycosylation site (N-linked (GlcNAc...) asparagine). Glu267 serves as the catalytic Nucleophile. N-linked (GlcNAc...) asparagine glycosylation occurs at Asn289.

The protein belongs to the glycosyl hydrolase 5 (cellulase A) family.

Its subcellular location is the secreted. The enzyme catalyses Endohydrolysis of (1-&gt;4)-beta-D-glucosidic linkages in cellulose, lichenin and cereal beta-D-glucans.. In terms of biological role, has endoglucanase activity on substrates containing beta-1,4 glycosidic bonds, like in carboxymethylcellulose (CMC), hydroxyethylcellulose (HEC) and beta-glucan. Involved in the degradation of complex natural cellulosic substrates. The sequence is that of Probable endo-beta-1,4-glucanase B (eglB) from Aspergillus kawachii (strain NBRC 4308) (White koji mold).